Consider the following 250-residue polypeptide: 5'-nucleotidase SurE (250 aa).

Positions 8, 9, 40, and 94 each coordinate a divalent metal cation.

Belongs to the SurE nucleotidase family. A divalent metal cation is required as a cofactor.

The protein resides in the cytoplasm. It catalyses the reaction a ribonucleoside 5'-phosphate + H2O = a ribonucleoside + phosphate. Its function is as follows. Nucleotidase that shows phosphatase activity on nucleoside 5'-monophosphates. This is 5'-nucleotidase SurE from Wolbachia sp. subsp. Brugia malayi (strain TRS).